Here is a 104-residue protein sequence, read N- to C-terminus: Large ribosomal subunit protein bL21c (104 aa).

This sequence belongs to the bacterial ribosomal protein bL21 family. As to quaternary structure, part of the 50S ribosomal subunit.

The protein resides in the plastid. It is found in the chloroplast. In terms of biological role, this protein binds to 23S rRNA. The sequence is that of Large ribosomal subunit protein bL21c from Pyropia yezoensis (Susabi-nori).